Here is a 448-residue protein sequence, read N- to C-terminus: Tubulin beta chain (448 aa).

GTP is bound by residues glutamine 11, glutamate 69, serine 138, glycine 142, threonine 143, glycine 144, asparagine 204, and asparagine 226. Position 69 (glutamate 69) interacts with Mg(2+). The disordered stretch occupies residues 429 to 448 (GIDEGDEDYEIEEEKEPLEY).

It belongs to the tubulin family. Dimer of alpha and beta chains. A typical microtubule is a hollow water-filled tube with an outer diameter of 25 nm and an inner diameter of 15 nM. Alpha-beta heterodimers associate head-to-tail to form protofilaments running lengthwise along the microtubule wall with the beta-tubulin subunit facing the microtubule plus end conferring a structural polarity. Microtubules usually have 13 protofilaments but different protofilament numbers can be found in some organisms and specialized cells. Mg(2+) serves as cofactor.

It is found in the cytoplasm. The protein resides in the cytoskeleton. Functionally, tubulin is the major constituent of microtubules, a cylinder consisting of laterally associated linear protofilaments composed of alpha- and beta-tubulin heterodimers. Microtubules grow by the addition of GTP-tubulin dimers to the microtubule end, where a stabilizing cap forms. Below the cap, tubulin dimers are in GDP-bound state, owing to GTPase activity of alpha-tubulin. This Schizosaccharomyces pombe (strain 972 / ATCC 24843) (Fission yeast) protein is Tubulin beta chain (nda3).